The primary structure comprises 487 residues: METVQLRNPPRRQLKKLDEDSLTKQPEEVFDVLEKLGEGSYGSVYKAIHKETGQIVAIKQVPVESDLQEIIKEISIMQQCDSPHVVKYYGSYFKNTDLWIVMEYCGAGSVSDIIRLRNKTLTEDEIATVLQSTLKGLEYLHFMRKIHRDIKAGNILLNTEGHAKLADFGVAGQLTDTMAKRNTVIGTPFWMAPEVIQEIGYNCVADIWSLGITAIEMAEGKPPYADIHPMRAIFMIPTNPPPTFRKPELWSDNFTDFVKQCLVKSPEQRATATQLLQHPFVKSAKGVSILRDLINEAMDVKLKRQESQQREVDQDDEENSEEDEMDSGTMVRAVGDEMGTVRVASTMTDGANTMIEHDDTLPSQLGTMVINTEDEEEEGTMKRRDETMQPAKPSFLEYFEQKEKENQINSFGKSVPGPLKNSSDWKIPQDGDYEFLKSWTVEDLQKRLLALDPMMEQEIEEIRQKYQSKRQPILDAIEAKKRRQQNF.

Met-1 is modified (N-acetylmethionine). Thr-3 carries the post-translational modification Phosphothreonine. In terms of domain architecture, Protein kinase spans 30–281 (FDVLEKLGEG…ATQLLQHPFV (252 aa)). ATP contacts are provided by residues 36-44 (LGEGSYGSV) and Lys-59. The active-site Proton acceptor is the Asp-149. At Thr-183 the chain carries Phosphothreonine; by autocatalysis. Residue Ser-265 is modified to Phosphoserine. Positions 290-310 (LRDLINEAMDVKLKRQESQQR) form a coiled coil. Positions 303 to 312 (KRQESQQREV) are enriched in basic and acidic residues. The interval 303-332 (KRQESQQREVDQDDEENSEEDEMDSGTMVR) is disordered. The span at 313 to 326 (DQDDEENSEEDEMD) shows a compositional bias: acidic residues. Ser-320 carries the post-translational modification Phosphoserine. A phosphothreonine mark is found at Thr-340 and Thr-367. At Thr-387 the chain carries Phosphothreonine; by PKB/AKT1. Residues Ser-410 and Ser-414 each carry the phosphoserine modification. At Tyr-433 the chain carries Phosphotyrosine. The SARAH domain occupies 433–480 (YEFLKSWTVEDLQKRLLALDPMMEQEIEEIRQKYQSKRQPILDAIEAK).

The protein belongs to the protein kinase superfamily. STE Ser/Thr protein kinase family. STE20 subfamily. In terms of assembly, homodimer; mediated via the coiled-coil region. Interacts with NORE1, which inhibits autoactivation. Interacts with and stabilizes SAV1. Interacts with RASSF1. Interacts with FOXO3. Interacts with RASSF2 (via SARAH domain). Interacts with AR, PKB/AKT1, TNNI3 and SIRT1. Interacts with DLG5 (via PDZ domain 3). Interacts with MARK3 and SCRIB in the presence of DLG5. Mg(2+) is required as a cofactor. In terms of processing, autophosphorylated on serine and threonine residues. Phosphorylation at Thr-387 by PKB/AKT1, leads to inhibition of its: kinase activity, nuclear translocation and autophosphorylation at Thr-183. It also diminishes its cleavage by caspases and its ability to phosphorylate FOXO3. Proteolytically cleaved by caspase-3 during apoptosis at Asp-326 and Asp-349 resulting in a 37 kDa or a 39 kDa subunit respectively. The 39 kDa subunit is further cleaved into the 37 kDa form. Proteolytic cleavage results in kinase activation and nuclear translocation of the truncated form (MST1/N). It is less likely that cleavage at Asp-349 is a prerequisite for activation as this site is not conserved in the murine ortholog.

Its subcellular location is the cytoplasm. It is found in the nucleus. It carries out the reaction L-seryl-[protein] + ATP = O-phospho-L-seryl-[protein] + ADP + H(+). The enzyme catalyses L-threonyl-[protein] + ATP = O-phospho-L-threonyl-[protein] + ADP + H(+). Its activity is regulated as follows. Inhibited by the C-terminal non-catalytic region. Activated by caspase-cleavage. Full activation also requires homodimerization and autophosphorylation of Thr-183. Activated by RASSF1 which acts by preventing its dephosphorylation. In terms of biological role, stress-activated, pro-apoptotic kinase which, following caspase-cleavage, enters the nucleus and induces chromatin condensation followed by internucleosomal DNA fragmentation. Key component of the Hippo signaling pathway which plays a pivotal role in organ size control and tumor suppression by restricting proliferation and promoting apoptosis. The core of this pathway is composed of a kinase cascade wherein STK3/MST2 and STK4/MST1, in complex with its regulatory protein SAV1, phosphorylates and activates LATS1/2 in complex with its regulatory protein MOB1, which in turn phosphorylates and inactivates YAP1 oncoprotein and WWTR1/TAZ. Phosphorylation of YAP1 by LATS2 inhibits its translocation into the nucleus to regulate cellular genes important for cell proliferation, cell death, and cell migration. STK3/MST2 and STK4/MST1 are required to repress proliferation of mature hepatocytes, to prevent activation of facultative adult liver stem cells (oval cells), and to inhibit tumor formation. Phosphorylates 'Ser-14' of histone H2B (H2BS14ph) during apoptosis. Phosphorylates FOXO3 upon oxidative stress, which results in its nuclear translocation and cell death initiation. Phosphorylates MOBKL1A, MOBKL1B and RASSF2. Phosphorylates TNNI3 (cardiac Tn-I) and alters its binding affinity to TNNC1 (cardiac Tn-C) and TNNT2 (cardiac Tn-T). Phosphorylates FOXO1 on 'Ser-212' and regulates its activation and stimulates transcription of PMAIP1 in a FOXO1-dependent manner. Phosphorylates SIRT1 and inhibits SIRT1-mediated p53/TP53 deacetylation, thereby promoting p53/TP53 dependent transcription and apoptosis upon DNA damage. Acts as an inhibitor of PKB/AKT1. Phosphorylates AR on 'Ser-650' and suppresses its activity by intersecting with PKB/AKT1 signaling and antagonizing formation of AR-chromatin complexes. The polypeptide is Serine/threonine-protein kinase 4 (STK4) (Colobus guereza (Mantled guereza)).